The following is a 539-amino-acid chain: Chaperonin GroEL (539 aa).

Residues 29-32 (TLGP), 86-90 (DGTTT), glycine 413, 476-478 (NAA), and aspartate 492 contribute to the ATP site.

It belongs to the chaperonin (HSP60) family. In terms of assembly, forms a cylinder of 14 subunits composed of two heptameric rings stacked back-to-back. Interacts with the co-chaperonin GroES.

The protein localises to the cytoplasm. The catalysed reaction is ATP + H2O + a folded polypeptide = ADP + phosphate + an unfolded polypeptide.. Functionally, together with its co-chaperonin GroES, plays an essential role in assisting protein folding. The GroEL-GroES system forms a nano-cage that allows encapsulation of the non-native substrate proteins and provides a physical environment optimized to promote and accelerate protein folding. This Parageobacillus thermoglucosidasius (Geobacillus thermoglucosidasius) protein is Chaperonin GroEL.